We begin with the raw amino-acid sequence, 87 residues long: Small ribosomal subunit protein bS18 (87 aa).

It belongs to the bacterial ribosomal protein bS18 family. In terms of assembly, part of the 30S ribosomal subunit. Forms a tight heterodimer with protein bS6.

Functionally, binds as a heterodimer with protein bS6 to the central domain of the 16S rRNA, where it helps stabilize the platform of the 30S subunit. The protein is Small ribosomal subunit protein bS18 of Oleidesulfovibrio alaskensis (strain ATCC BAA-1058 / DSM 17464 / G20) (Desulfovibrio alaskensis).